The sequence spans 236 residues: MSKNKSPLLNESEKMMSEMLPMKVSQSKLNYEEKVYIPTTIRNRKQHCFRRFFPYIALFQIIMLIILLILYFCFPNLFYSTNFNTNFNTSLLQNNSIETKLNSIPPQNNSQKTEVPIILNYTTQKTEVTEPIIINNTTEEIETQTIMIPKSTDQTQTIISAKTTAIISPPETSETIAQVLKNSDKREHDDEELSFTTEMETITTETETSSTIPHLRSLPIKSESSMETTSEETDEE.

The chain crosses the membrane as a helical span at residues 52-72 (FFPYIALFQIIMLIILLILYF). Residues 183–236 (SDKREHDDEELSFTTEMETITTETETSSTIPHLRSLPIKSESSMETTSEETDEE) are disordered. A compositionally biased stretch (low complexity) spans 196–212 (TTEMETITTETETSSTI).

The protein localises to the membrane. This is an uncharacterized protein from Acheta domesticus (House cricket).